A 398-amino-acid chain; its full sequence is MTQQLHSYFGEFGGMYVPQILIPALIQLEKEFIEAMKDISFQTTFKNLLHHYAGRPTPLTLCQNLTSGTCSKLYLKREDLLHGGSHKTNQVLGQALLAKRMHKKEIIAETGAGQHGVAVSIASSLLKLKCRIYMGYKDMKRQELNVLRMKLMGTQVIPVHHGSATLKDACNEAIREWSSTYKHTHYMIGTVAGPHPFPTIVKEFQRIIGSETYNQIQTHEKKLPDAVIACIGGGSNAIGIFSGFIDIPSVQLLGVEAGGLGLHTEYHGSSLQCGETGIYFGMKSPILQSQEGQIKNSYSIAAGLDFPSVGPEHAYLKKINRVKYVSINDEEAINAFQELSLYEGIIPALESAHALAHALKIIRKTPKKKQILIVNLSGRGDKDIITVNNALLNKEICK.

At Lys-87 the chain carries N6-(pyridoxal phosphate)lysine.

Belongs to the TrpB family. As to quaternary structure, tetramer of two alpha and two beta chains. Requires pyridoxal 5'-phosphate as cofactor.

It catalyses the reaction (1S,2R)-1-C-(indol-3-yl)glycerol 3-phosphate + L-serine = D-glyceraldehyde 3-phosphate + L-tryptophan + H2O. It functions in the pathway amino-acid biosynthesis; L-tryptophan biosynthesis; L-tryptophan from chorismate: step 5/5. The beta subunit is responsible for the synthesis of L-tryptophan from indole and L-serine. In Blochmanniella floridana, this protein is Tryptophan synthase beta chain.